The following is a 318-amino-acid chain: Mitochondrial coenzyme A transporter SLC25A42 (318 aa).

Solcar repeat units lie at residues 31-117 (RQVL…YKRI), 129-214 (LPPW…LKSL), and 224-312 (PYPF…MQIL). The next 6 membrane-spanning stretches (helical) occupy residues 33–53 (VLSS…AVAP), 89–109 (LWRG…IQFS), 135–155 (LLAG…LDLV), 186–206 (LYFG…LSFF), 230–250 (MVFG…LDVV), and 293–313 (LKGP…QILL).

The protein belongs to the mitochondrial carrier (TC 2.A.29) family.

It localises to the mitochondrion inner membrane. The enzyme catalyses ADP(out) + CoA(in) = ADP(in) + CoA(out). It catalyses the reaction 3'-dephospho-CoA(in) + ADP(out) = 3'-dephospho-CoA(out) + ADP(in). It carries out the reaction adenosine 3',5'-bisphosphate(in) + ADP(out) = adenosine 3',5'-bisphosphate(out) + ADP(in). The catalysed reaction is AMP(in) + ADP(out) = AMP(out) + ADP(in). The enzyme catalyses dADP(in) + ADP(out) = dADP(out) + ADP(in). It catalyses the reaction ADP(in) + ATP(out) = ADP(out) + ATP(in). Functionally, mitochondrial carrier mediating the transport of coenzyme A (CoA) in mitochondria in exchange for intramitochondrial (deoxy)adenine nucleotides and adenosine 3',5'-diphosphate. This Mus musculus (Mouse) protein is Mitochondrial coenzyme A transporter SLC25A42 (Slc25a42).